The primary structure comprises 284 residues: Tropomyosin (284 aa).

Positions 1 to 284 (MDAIKKKMQA…DQTFAEIAGY (284 aa)) form a coiled coil. Residues 103 to 133 (EEKLATTTEKLEEASKAADESERNRKVLEGR) form a disordered region.

Belongs to the tropomyosin family. Homodimer.

Tropomyosin, in association with the troponin complex, plays a central role in the calcium dependent regulation of muscle contraction. This is Tropomyosin from Chlamys nipponensis akazara (Akazara scallop).